The chain runs to 185 residues: Large ribosomal subunit protein uL18 (185 aa).

Belongs to the universal ribosomal protein uL18 family. As to quaternary structure, part of the 50S ribosomal subunit. Contacts the 5S and 23S rRNAs.

In terms of biological role, this is one of the proteins that bind and probably mediate the attachment of the 5S RNA into the large ribosomal subunit, where it forms part of the central protuberance. The polypeptide is Large ribosomal subunit protein uL18 (Halorubrum lacusprofundi (strain ATCC 49239 / DSM 5036 / JCM 8891 / ACAM 34)).